The following is a 250-amino-acid chain: NADH-quinone oxidoreductase subunit C (250 aa).

2 disordered regions span residues Met-1–Glu-33 and Leu-228–Asn-250.

Belongs to the complex I 30 kDa subunit family. In terms of assembly, NDH-1 is composed of 14 different subunits. Subunits NuoB, C, D, E, F, and G constitute the peripheral sector of the complex.

It is found in the cell membrane. The catalysed reaction is a quinone + NADH + 5 H(+)(in) = a quinol + NAD(+) + 4 H(+)(out). Its function is as follows. NDH-1 shuttles electrons from NADH, via FMN and iron-sulfur (Fe-S) centers, to quinones in the respiratory chain. The immediate electron acceptor for the enzyme in this species is believed to be a menaquinone. Couples the redox reaction to proton translocation (for every two electrons transferred, four hydrogen ions are translocated across the cytoplasmic membrane), and thus conserves the redox energy in a proton gradient. In Nocardioides sp. (strain ATCC BAA-499 / JS614), this protein is NADH-quinone oxidoreductase subunit C.